Consider the following 367-residue polypeptide: UDP-N-acetylglucosamine--N-acetylmuramyl-(pentapeptide) pyrophosphoryl-undecaprenol N-acetylglucosamine transferase (367 aa).

Residues 15-17 (TGG), N127, R163, S191, I249, and Q294 contribute to the UDP-N-acetyl-alpha-D-glucosamine site.

It belongs to the glycosyltransferase 28 family. MurG subfamily.

The protein resides in the cell inner membrane. The catalysed reaction is di-trans,octa-cis-undecaprenyl diphospho-N-acetyl-alpha-D-muramoyl-L-alanyl-D-glutamyl-meso-2,6-diaminopimeloyl-D-alanyl-D-alanine + UDP-N-acetyl-alpha-D-glucosamine = di-trans,octa-cis-undecaprenyl diphospho-[N-acetyl-alpha-D-glucosaminyl-(1-&gt;4)]-N-acetyl-alpha-D-muramoyl-L-alanyl-D-glutamyl-meso-2,6-diaminopimeloyl-D-alanyl-D-alanine + UDP + H(+). The protein operates within cell wall biogenesis; peptidoglycan biosynthesis. In terms of biological role, cell wall formation. Catalyzes the transfer of a GlcNAc subunit on undecaprenyl-pyrophosphoryl-MurNAc-pentapeptide (lipid intermediate I) to form undecaprenyl-pyrophosphoryl-MurNAc-(pentapeptide)GlcNAc (lipid intermediate II). The chain is UDP-N-acetylglucosamine--N-acetylmuramyl-(pentapeptide) pyrophosphoryl-undecaprenol N-acetylglucosamine transferase from Burkholderia ambifaria (strain MC40-6).